The primary structure comprises 597 residues: Protein disulfide isomerase-like 1-4 (597 aa).

Positions 1 to 25 (MAFRVLLLFSLTALLIFSAVSPSFA) are cleaved as a signal peptide. 2 stretches are compositionally biased toward acidic residues: residues 37 to 49 (LSFL…DDVP) and 61 to 84 (DEFE…EGDF). Residues 37–101 (LSFLEDLKED…SDPLPTPEID (65 aa)) are disordered. The Thioredoxin 1 domain maps to 85–208 (SDLGNPDSDP…IVTWVKKKIG (124 aa)). Asparagine 112 carries an N-linked (GlcNAc...) asparagine glycan. Active-site nucleophile residues include cysteine 132 and cysteine 135. Cysteine 132 and cysteine 135 form a disulfide bridge. Asparagine 213 and asparagine 342 each carry an N-linked (GlcNAc...) asparagine glycan. One can recognise a Thioredoxin 2 domain in the interval 429–550 (FYKSDPIPEK…FYKFLRKHAT (122 aa)). Active-site nucleophile residues include cysteine 471 and cysteine 474. A disulfide bridge links cysteine 471 with cysteine 474. The N-linked (GlcNAc...) asparagine glycan is linked to asparagine 524. The tract at residues 555 to 597 (LEKPASTESPKTAESTPKVETTETKESPDSTTKSSQSDSKDEL) is disordered. The segment covering 560-573 (STESPKTAESTPKV) has biased composition (polar residues). The Prevents secretion from ER motif lies at 594–597 (KDEL).

This sequence belongs to the protein disulfide isomerase family. As to quaternary structure, interacts with MEE8 and MED37A. In terms of tissue distribution, expressed in germinating seedling, including the cotyledons and hypocotyl, in vascular tissues, in pollen grains, root tips, leaf trichomes, developing seeds and siliques.

The protein localises to the endoplasmic reticulum lumen. It localises to the golgi apparatus. Its subcellular location is the vacuole. It is found in the nucleus. The protein resides in the secreted. The protein localises to the cell wall. The catalysed reaction is Catalyzes the rearrangement of -S-S- bonds in proteins.. Its function is as follows. Acts as a protein-folding catalyst that interacts with nascent polypeptides to catalyze the formation, isomerization, and reduction or oxidation of disulfide bonds. The polypeptide is Protein disulfide isomerase-like 1-4 (PDIL1-4) (Arabidopsis thaliana (Mouse-ear cress)).